We begin with the raw amino-acid sequence, 457 residues long: Heme sensor protein HssS (457 aa).

2 helical membrane passes run 9–29 (IAIY…VLTN) and 164–184 (TFLA…VIAS). An HAMP domain is found at 186–238 (YSIIRPVKKLKLATERLIDGDFETPIKQTRKDEIGTLQYHFNKMRESLGQVDQ). In terms of domain architecture, Histidine kinase spans 246 to 456 (NVSHEIKTPL…TFTITLPNNS (211 aa)). H249 bears the Phosphohistidine; by autocatalysis mark.

In terms of processing, autophosphorylated.

The protein resides in the cell membrane. It carries out the reaction ATP + protein L-histidine = ADP + protein N-phospho-L-histidine.. Functionally, member of the two-component regulatory system HssS/HssR involved in intracellular heme homeostasis and tempering of staphylococcal virulence. HssS functions as a heme sensor histidine kinase which is autophosphorylated at a histidine residue and transfers its phosphate group to an aspartate residue of HssR. HssR/HssS activates the expression of hrtAB, an efflux pump, in response to extracellular heme, hemin, hemoglobin or blood. The polypeptide is Heme sensor protein HssS (hssS) (Staphylococcus aureus (strain MSSA476)).